We begin with the raw amino-acid sequence, 123 residues long: NADH-quinone oxidoreductase subunit A (123 aa).

3 consecutive transmembrane segments (helical) span residues leucine 6 to isoleucine 26, valine 66 to valine 86, and tryptophan 93 to isoleucine 113.

This sequence belongs to the complex I subunit 3 family. NDH-1 is composed of 14 different subunits. Subunits NuoA, H, J, K, L, M, N constitute the membrane sector of the complex.

The protein localises to the cell inner membrane. It catalyses the reaction a quinone + NADH + 5 H(+)(in) = a quinol + NAD(+) + 4 H(+)(out). Its function is as follows. NDH-1 shuttles electrons from NADH, via FMN and iron-sulfur (Fe-S) centers, to quinones in the respiratory chain. The immediate electron acceptor for the enzyme in this species is believed to be ubiquinone. Couples the redox reaction to proton translocation (for every two electrons transferred, four hydrogen ions are translocated across the cytoplasmic membrane), and thus conserves the redox energy in a proton gradient. This is NADH-quinone oxidoreductase subunit A from Myxococcus xanthus (strain DK1622).